Reading from the N-terminus, the 315-residue chain is MIEIEKPKIECVVCSEDNRYGKFVVEPLERGYGITLGNSLRRILLSSLPGVAVTSIKIDGILHEFSTIPGVIEDVTEIILNIKELSLNFHGEGPKVIYIDAEGEGEVKAKDIKADADVEILNPEHKIATLSGDHRLYMEMTIDKGRGYVSAEKNKHPGQPIGVIPVDSIFTPVHKVNYTVENTRVGQVTDYDKLTLEVWTNGSIKPDEAISLGAKILSEHLNLFIDLSDNAKNAEIMVEKEETKKEKVLEMTIEELDLSVRSYNCLKRAGINTVEDLISRTEEDMMKVRNLGRKSLEEVVNKLKALGLSLAPSED.

An alpha N-terminal domain (alpha-NTD) region spans residues 1–228; the sequence is MIEIEKPKIE…EHLNLFIDLS (228 aa). Residues 245–315 form an alpha C-terminal domain (alpha-CTD) region; the sequence is KEKVLEMTIE…LGLSLAPSED (71 aa).

It belongs to the RNA polymerase alpha chain family. As to quaternary structure, homodimer. The RNAP catalytic core consists of 2 alpha, 1 beta, 1 beta' and 1 omega subunit. When a sigma factor is associated with the core the holoenzyme is formed, which can initiate transcription.

It carries out the reaction RNA(n) + a ribonucleoside 5'-triphosphate = RNA(n+1) + diphosphate. In terms of biological role, DNA-dependent RNA polymerase catalyzes the transcription of DNA into RNA using the four ribonucleoside triphosphates as substrates. This is DNA-directed RNA polymerase subunit alpha from Acetivibrio thermocellus (strain ATCC 27405 / DSM 1237 / JCM 9322 / NBRC 103400 / NCIMB 10682 / NRRL B-4536 / VPI 7372) (Clostridium thermocellum).